Consider the following 591-residue polypeptide: Aspartate--tRNA(Asp/Asn) ligase (591 aa).

Glu170 lines the L-aspartate pocket. Positions 194–197 (QLFK) are aspartate. Residue Arg216 coordinates L-aspartate. Residues 216 to 218 (RDE) and Gln225 contribute to the ATP site. His448 contacts L-aspartate. Glu482 serves as a coordination point for ATP. Arg489 contributes to the L-aspartate binding site. Position 534 to 537 (534 to 537 (GWDR)) interacts with ATP. The tract at residues 559–591 (GGVDPLTDAPAPITEQQRKESGIDVKPEPSKPH) is disordered. Basic and acidic residues predominate over residues 574–591 (QQRKESGIDVKPEPSKPH).

It belongs to the class-II aminoacyl-tRNA synthetase family. Type 1 subfamily. In terms of assembly, homodimer.

The protein resides in the cytoplasm. The catalysed reaction is tRNA(Asx) + L-aspartate + ATP = L-aspartyl-tRNA(Asx) + AMP + diphosphate. Aspartyl-tRNA synthetase with relaxed tRNA specificity since it is able to aspartylate not only its cognate tRNA(Asp) but also tRNA(Asn). Reaction proceeds in two steps: L-aspartate is first activated by ATP to form Asp-AMP and then transferred to the acceptor end of tRNA(Asp/Asn). This Mycobacterium avium (strain 104) protein is Aspartate--tRNA(Asp/Asn) ligase.